A 428-amino-acid chain; its full sequence is Putative UDP-glucose 6-dehydrogenase YtcA (428 aa).

The signal sequence occupies residues 1–23; the sequence is MKICVVGAGYVGLTLSAALASIG. NAD(+)-binding positions include 2-19, Val-11, Asp-30, Lys-35, Thr-118, and Glu-152; that span reads KICV…SAAL. Residues 148–152, Lys-203, Asn-207, 248–252, and Gly-256 contribute to the substrate site; these read EFLRE and FLQAG. Cys-259 acts as the Nucleophile in catalysis. Lys-262 contacts NAD(+). Position 319 (Lys-319) interacts with substrate. Arg-326 contributes to the NAD(+) binding site.

This sequence belongs to the UDP-glucose/GDP-mannose dehydrogenase family.

The enzyme catalyses UDP-alpha-D-glucose + 2 NAD(+) + H2O = UDP-alpha-D-glucuronate + 2 NADH + 3 H(+). The protein operates within nucleotide-sugar biosynthesis; UDP-alpha-D-glucuronate biosynthesis; UDP-alpha-D-glucuronate from UDP-alpha-D-glucose: step 1/1. In terms of biological role, catalyzes the conversion of UDP-glucose into UDP-glucuronate, one of the precursors of teichuronic acid. This chain is Putative UDP-glucose 6-dehydrogenase YtcA (ytcA), found in Bacillus subtilis (strain 168).